The sequence spans 447 residues: Ribosomal protein uS12 methylthiotransferase RimO (447 aa).

The 111-residue stretch at 4-114 folds into the MTTase N-terminal domain; that stretch reads PKVGFVSLGC…VMEAVHEYVP (111 aa). Cys13, Cys49, Cys78, Cys147, Cys151, and Cys154 together coordinate [4Fe-4S] cluster. The Radical SAM core domain maps to 133–370; sequence LTPKHYAYLK…MQVQQEISAA (238 aa). The TRAM domain occupies 373–443; sequence QKRIGQTMTV…EYDLFAKLIQ (71 aa).

Belongs to the methylthiotransferase family. RimO subfamily. Requires [4Fe-4S] cluster as cofactor.

The protein resides in the cytoplasm. The catalysed reaction is L-aspartate(89)-[ribosomal protein uS12]-hydrogen + (sulfur carrier)-SH + AH2 + 2 S-adenosyl-L-methionine = 3-methylsulfanyl-L-aspartate(89)-[ribosomal protein uS12]-hydrogen + (sulfur carrier)-H + 5'-deoxyadenosine + L-methionine + A + S-adenosyl-L-homocysteine + 2 H(+). Functionally, catalyzes the methylthiolation of an aspartic acid residue of ribosomal protein uS12. The chain is Ribosomal protein uS12 methylthiotransferase RimO from Acinetobacter baylyi (strain ATCC 33305 / BD413 / ADP1).